The chain runs to 329 residues: Isopenicillin N synthase (329 aa).

Isopenicillin N is bound by residues R87, Y91, and Y189. N-[(5S)-5-amino-5-carboxypentanoyl]-L-cysteinyl-D-valine contacts are provided by R87, Y91, Y189, H212, and D214. Residues 180 to 286 (TLSAVTLIHY…RLSLPFFLHA (107 aa)) form the Fe2OG dioxygenase domain. Fe(2+) contacts are provided by H212, D214, and H268. R277 contacts 2-oxoglutarate. S279 serves as a coordination point for isopenicillin N. Residue S279 participates in N-[(5S)-5-amino-5-carboxypentanoyl]-L-cysteinyl-D-valine binding.

It belongs to the iron/ascorbate-dependent oxidoreductase family. Fe cation serves as cofactor. The cofactor is L-ascorbate.

It catalyses the reaction N-[(5S)-5-amino-5-carboxypentanoyl]-L-cysteinyl-D-valine + O2 = isopenicillin N + 2 H2O. It participates in antibiotic biosynthesis; penicillin G biosynthesis; penicillin G from L-alpha-aminoadipate and L-cysteine and L-valine: step 2/3. Its function is as follows. Removes, in the presence of oxygen, 4 hydrogen atoms from delta-L-(alpha-aminoadipyl)-L-cysteinyl-D-valine (ACV) to form the azetidinone and thiazolidine rings of isopenicillin. This chain is Isopenicillin N synthase (pcbC), found in Streptomyces griseus.